Reading from the N-terminus, the 3919-residue chain is Intermembrane lipid transfer protein Vps13D (3919 aa).

The Chorein N-terminal domain occupies 4 to 114; it reads DLITWVLNTY…QDLEYKLAVL (111 aa). A disordered region spans residues 706 to 736; that stretch reads TSDDDETYLTPCSTPPASEKSGSESPTLLEN. Residues 2292 to 2334 form the UBA domain; the sequence is KADSDLEKAAPLVAMGFEISDCLYAMQINNWRINDAAIWLSQQ. The region spanning 2837–3113 is the SHR-BD domain; that stretch reads ELYISAPVWI…YVMDDPLGQQ (277 aa). The segment at 3749–3768 is disordered; it reads VRETSRDSHRNAPERKRLPR. Positions 3751 to 3764 are enriched in basic and acidic residues; it reads ETSRDSHRNAPERK.

Belongs to the VPS13 family. Expressed in intestinal cells (at protein level).

It localises to the cytoplasm. It is found in the lysosome. Its function is as follows. Mediates the transfer of lipids between membranes at organelle contact sites. Functions in promoting mitochondrial clearance by mitochondrial autophagy (mitophagy), also possibly by positively regulating mitochondrial fission. Mitophagy plays an important role in regulating cell health and mitochondrial size and homeostasis. The chain is Intermembrane lipid transfer protein Vps13D from Drosophila melanogaster (Fruit fly).